A 355-amino-acid polypeptide reads, in one-letter code: Diacylglycerol O-acyltransferase 2A (355 aa).

The next 2 membrane-spanning stretches (helical) occupy residues 41 to 61 and 62 to 78; these read LLWCSMMSICMFIFFFLCSIP and VLLWFPIILYLTWILVW. N-linked (GlcNAc...) asparagine glycosylation is present at asparagine 142.

The protein belongs to the diacylglycerol acyltransferase family.

The protein localises to the endoplasmic reticulum membrane. The catalysed reaction is an acyl-CoA + a 1,2-diacyl-sn-glycerol = a triacyl-sn-glycerol + CoA. It functions in the pathway glycerolipid metabolism; triacylglycerol biosynthesis. Functionally, catalyzes the terminal and only committed step in triacylglycerol synthesis by using diacylglycerol and fatty acyl CoA as substrates. Required for storage lipid synthesis. This Umbelopsis ramanniana (Oleaginous fungus) protein is Diacylglycerol O-acyltransferase 2A (DGAT2A).